Consider the following 1185-residue polypeptide: Calmodulin-binding transcription activator homolog 1 (1185 aa).

Positions 72 to 200 form a DNA-binding region, CG-1; it reads AVELFPCFKD…YLNVKTNNKI (129 aa). Disordered stretches follow at residues 252–277 and 390–411; these read GVNLPTSPLPQEPSSSTSRELERRNS and KIRSGSQESPMGPPSSSSVTST. Residues 393 to 411 are compositionally biased toward low complexity; it reads SGSQESPMGPPSSSSVTST. The IPT/TIG domain occupies 418–498; the sequence is EMTPSSSSLK…ISTASEFTYE (81 aa). Residues 616-646 form an ANK repeat; sequence DGSTPLHTACKNSASRIARLIISIDSSAIDV. An IQ domain is found at 957–984; sequence EAAMVIQRAYRVYRARSTTRRQEDIERR. A disordered region spans residues 1121–1185; sequence CPQTSGDQRN…KPPYGCGTLA (65 aa). Positions 1128-1147 are enriched in basic and acidic residues; it reads QRNKRDSDGERKRDAHHDAP.

Belongs to the CAMTA family. As to quaternary structure, may interact with calmodulin. As to expression, expressed broadly in the nervous system.

It localises to the nucleus. In terms of biological role, transcription factor. Positively modulates neuronal levels of the ubiquitous Ca2+ sensor calmodulin/cmd-1, probably by direct binding to the cmd-1 promoter, thereby regulating Ca2+ signaling, physiology, and behavior. In Caenorhabditis elegans, this protein is Calmodulin-binding transcription activator homolog 1.